The sequence spans 403 residues: Chorismate synthase (403 aa).

Residues Arg40 and Arg46 each contribute to the NADP(+) site. FMN contacts are provided by residues 140-142, 261-262, Gly305, 320-324, and Arg346; these read RSS, QA, and KPIST.

Belongs to the chorismate synthase family. As to quaternary structure, homotetramer. Requires FMNH2 as cofactor.

It carries out the reaction 5-O-(1-carboxyvinyl)-3-phosphoshikimate = chorismate + phosphate. It functions in the pathway metabolic intermediate biosynthesis; chorismate biosynthesis; chorismate from D-erythrose 4-phosphate and phosphoenolpyruvate: step 7/7. In terms of biological role, catalyzes the anti-1,4-elimination of the C-3 phosphate and the C-6 proR hydrogen from 5-enolpyruvylshikimate-3-phosphate (EPSP) to yield chorismate, which is the branch point compound that serves as the starting substrate for the three terminal pathways of aromatic amino acid biosynthesis. This reaction introduces a second double bond into the aromatic ring system. In Corynebacterium diphtheriae (strain ATCC 700971 / NCTC 13129 / Biotype gravis), this protein is Chorismate synthase.